Here is a 215-residue protein sequence, read N- to C-terminus: Uridine kinase (215 aa).

Residue 16–23 (GASASGKS) participates in ATP binding.

Belongs to the uridine kinase family.

The protein resides in the cytoplasm. It carries out the reaction uridine + ATP = UMP + ADP + H(+). The enzyme catalyses cytidine + ATP = CMP + ADP + H(+). It participates in pyrimidine metabolism; CTP biosynthesis via salvage pathway; CTP from cytidine: step 1/3. It functions in the pathway pyrimidine metabolism; UMP biosynthesis via salvage pathway; UMP from uridine: step 1/1. This Aliivibrio fischeri (strain ATCC 700601 / ES114) (Vibrio fischeri) protein is Uridine kinase.